A 427-amino-acid chain; its full sequence is Enolase (427 aa).

Q163 serves as a coordination point for (2R)-2-phosphoglycerate. The active-site Proton donor is the E205. Residues D242, E285, and D312 each contribute to the Mg(2+) site. Residues K337, R366, S367, and K388 each contribute to the (2R)-2-phosphoglycerate site. Catalysis depends on K337, which acts as the Proton acceptor.

This sequence belongs to the enolase family. It depends on Mg(2+) as a cofactor.

Its subcellular location is the cytoplasm. It localises to the secreted. The protein localises to the cell surface. The enzyme catalyses (2R)-2-phosphoglycerate = phosphoenolpyruvate + H2O. Its pathway is carbohydrate degradation; glycolysis; pyruvate from D-glyceraldehyde 3-phosphate: step 4/5. Functionally, catalyzes the reversible conversion of 2-phosphoglycerate (2-PG) into phosphoenolpyruvate (PEP). It is essential for the degradation of carbohydrates via glycolysis. This is Enolase from Polaromonas sp. (strain JS666 / ATCC BAA-500).